A 328-amino-acid chain; its full sequence is Cytochrome c biogenesis protein CcsA (328 aa).

The next 8 membrane-spanning stretches (helical) occupy residues phenylalanine 15–proline 35, leucine 37–glycine 57, isoleucine 68–isoleucine 88, leucine 97–leucine 117, valine 142–phenylalanine 162, isoleucine 236–asparagine 256, tryptophan 271–tryptophan 291, and alanine 297–leucine 317.

The protein belongs to the CcmF/CycK/Ccl1/NrfE/CcsA family. In terms of assembly, may interact with ccs1.

It localises to the cellular thylakoid membrane. Its function is as follows. Required during biogenesis of c-type cytochromes (cytochrome c6 and cytochrome f) at the step of heme attachment. This Gloeothece citriformis (strain PCC 7424) (Cyanothece sp. (strain PCC 7424)) protein is Cytochrome c biogenesis protein CcsA.